We begin with the raw amino-acid sequence, 913 residues long: Alanine--tRNA ligase (913 aa).

Positions 608, 612, 711, and 715 each coordinate Zn(2+).

It belongs to the class-II aminoacyl-tRNA synthetase family. Requires Zn(2+) as cofactor.

The protein localises to the cytoplasm. It catalyses the reaction tRNA(Ala) + L-alanine + ATP = L-alanyl-tRNA(Ala) + AMP + diphosphate. Functionally, catalyzes the attachment of alanine to tRNA(Ala) in a two-step reaction: alanine is first activated by ATP to form Ala-AMP and then transferred to the acceptor end of tRNA(Ala). Also edits incorrectly charged Ser-tRNA(Ala) and Gly-tRNA(Ala) via its editing domain. The sequence is that of Alanine--tRNA ligase from Methanocorpusculum labreanum (strain ATCC 43576 / DSM 4855 / Z).